Reading from the N-terminus, the 251-residue chain is Putative F-box protein L166 (251 aa).

Residues 1–46 enclose the F-box domain; sequence MDNICELFDEILPLIIEYLSDHDKVKFMTTCSRLYYFIDKVYYENI. The disordered stretch occupies residues 188 to 251; it reads PEPESQENFR…RPKSFMKYRR (64 aa). Polar residues predominate over residues 202-217; sequence TESNNNKPVNKSQPQI. Over residues 241–251 the composition is skewed to basic residues; sequence KRPKSFMKYRR.

The polypeptide is Putative F-box protein L166 (Acanthamoeba polyphaga (Amoeba)).